The chain runs to 883 residues: Integrator complex subunit 6 (883 aa).

Residues 3–227 (ILLFLIDTSA…QCLESLVQKV (225 aa)) form the VWFA domain. The Inhibitory loop signature appears at 625–632 (MMIDEADE). The disordered stretch occupies residues 666–686 (RRQSPAVNSHIGGKGPPAPMT). Phosphoserine is present on Ser800.

It belongs to the Integrator subunit 6 family. As to quaternary structure, component of the Integrator complex, composed of core subunits INTS1, INTS2, INTS3, INTS4, INTS5, INTS6, INTS7, INTS8, INTS9/RC74, INTS10, INTS11/CPSF3L, INTS12, INTS13, INTS14 and INTS15. The core complex associates with protein phosphatase 2A subunits PPP2CA and PPP2R1A, to form the Integrator-PP2A (INTAC) complex.

Its subcellular location is the nucleus. It is found in the chromosome. Its function is as follows. Component of the integrator complex, a multiprotein complex that terminates RNA polymerase II (Pol II) transcription in the promoter-proximal region of genes. The integrator complex provides a quality checkpoint during transcription elongation by driving premature transcription termination of transcripts that are unfavorably configured for transcriptional elongation: the complex terminates transcription by (1) catalyzing dephosphorylation of the C-terminal domain (CTD) of Pol II subunit POLR2A/RPB1 and SUPT5H/SPT5, (2) degrading the exiting nascent RNA transcript via endonuclease activity and (3) promoting the release of Pol II from bound DNA. The integrator complex is also involved in terminating the synthesis of non-coding Pol II transcripts, such as enhancer RNAs (eRNAs), small nuclear RNAs (snRNAs), telomerase RNAs and long non-coding RNAs (lncRNAs). Within the integrator complex, INTS6 acts as a molecular adapter that promotes assembly of protein phosphatase 2A (PP2A) subunits to the integrator core complex, promoting recruitment of PP2A to transcription pause-release checkpoint. Mediates recruitment of cytoplasmic dynein to the nuclear envelope, probably as component of the integrator complex. The chain is Integrator complex subunit 6 (Ints6) from Mus musculus (Mouse).